Reading from the N-terminus, the 599-residue chain is MTTPAPLTGLLPLNPEQLARLQAATTDLTPEQLAWVSGYFWGVLNPRSGAVAVTPVPERKMPRVTLISASQTGNARRVAEALRDDLLAANLNVTLVNAGDYKFKQIASEKLLVIVTSTQGEGEPPEEAVALHKFLFSKKAPKLENTAFAVFSLGDTSYEFFCQSGKDFDSKLAELGGERLLDRVDADVEYQAAASEWRARVVDVLKSRAPVAAPSQSVATGAVNDIHTSPYTKDAPLIATLSVNQKITGRNSEKDVRHIEIDLGDSGLRYQPGDALGVWYQNDPALVKELVELLWLKGDEPVTVDGKTLPLAEALEWHFELTVNTANIVENYATLTRSESLLPLVGDKAQLQHYAATTPIVDMVRFSPAQLDAQALIDLLRPLTPRLYSIASAQAEVESEVHITVGVVRYDIEGRARAGGASSFLADRVEEEGEVRVFIEHNDNFRLPANPETPVIMIGPGTGIAPFRSFMQQRAAEGVEGKNWLFFGNPHFTEDFLYQVEWQRYVKEGVLSRIDLAWSRDQKEKIYVQDKLREQGAELWRWINDGAHIYVCGDARRMAADVEKALLEVIAEFGGMDLESADEYLSELRVERRYQRDVY.

Positions 64 to 202 (VTLISASQTG…AASEWRARVV (139 aa)) constitute a Flavodoxin-like domain. FMN contacts are provided by residues 70 to 75 (SQTGNA), 117 to 120 (STQG), and 153 to 162 (LGDTSYEFFC). An FAD-binding FR-type domain is found at 234–448 (DAPLIATLSV…IEHNDNFRLP (215 aa)). FAD is bound by residues threonine 322, alanine 356, 386–389 (RLYS), 404–406 (TVG), tyrosine 410, and 419–422 (GGAS). NADP(+)-binding positions include 519–520 (SR), 525–529 (KIYVQ), and aspartate 561. FAD is bound at residue tyrosine 599.

The protein belongs to the NADPH-dependent sulphite reductase flavoprotein subunit CysJ family. This sequence in the N-terminal section; belongs to the flavodoxin family. It in the C-terminal section; belongs to the flavoprotein pyridine nucleotide cytochrome reductase family. Alpha(8)-beta(8). The alpha component is a flavoprotein, the beta component is a hemoprotein. FAD is required as a cofactor. It depends on FMN as a cofactor.

It catalyses the reaction hydrogen sulfide + 3 NADP(+) + 3 H2O = sulfite + 3 NADPH + 4 H(+). Its pathway is sulfur metabolism; hydrogen sulfide biosynthesis; hydrogen sulfide from sulfite (NADPH route): step 1/1. Its function is as follows. Component of the sulfite reductase complex that catalyzes the 6-electron reduction of sulfite to sulfide. This is one of several activities required for the biosynthesis of L-cysteine from sulfate. The flavoprotein component catalyzes the electron flow from NADPH -&gt; FAD -&gt; FMN to the hemoprotein component. This Salmonella typhimurium (strain LT2 / SGSC1412 / ATCC 700720) protein is Sulfite reductase [NADPH] flavoprotein alpha-component.